Consider the following 446-residue polypeptide: Phosphoglucosamine mutase (446 aa).

Ser-102 acts as the Phosphoserine intermediate in catalysis. Mg(2+) contacts are provided by Ser-102, Asp-241, Asp-243, and Asp-245. At Ser-102 the chain carries Phosphoserine.

This sequence belongs to the phosphohexose mutase family. Mg(2+) serves as cofactor. In terms of processing, activated by phosphorylation.

The catalysed reaction is alpha-D-glucosamine 1-phosphate = D-glucosamine 6-phosphate. Catalyzes the conversion of glucosamine-6-phosphate to glucosamine-1-phosphate. This Yersinia pseudotuberculosis serotype O:1b (strain IP 31758) protein is Phosphoglucosamine mutase.